A 264-amino-acid polypeptide reads, in one-letter code: tRNA pseudouridine synthase A (264 aa).

The Nucleophile role is filled by Asp51. Tyr109 is a substrate binding site.

This sequence belongs to the tRNA pseudouridine synthase TruA family. In terms of assembly, homodimer.

The enzyme catalyses uridine(38/39/40) in tRNA = pseudouridine(38/39/40) in tRNA. Its function is as follows. Formation of pseudouridine at positions 38, 39 and 40 in the anticodon stem and loop of transfer RNAs. The chain is tRNA pseudouridine synthase A from Vibrio vulnificus (strain CMCP6).